We begin with the raw amino-acid sequence, 513 residues long: Na(+)/H(+) antiporter NhaB (513 aa).

12 helical membrane passes run leucine 23–alanine 43, isoleucine 52–isoleucine 72, leucine 97–phenylalanine 117, leucine 120–phenylalanine 140, phenylalanine 144–isoleucine 164, leucine 202–proline 222, phenylalanine 238–leucine 258, alanine 303–isoleucine 323, threonine 348–isoleucine 368, leucine 391–isoleucine 411, alanine 447–isoleucine 467, and valine 475–phenylalanine 495.

This sequence belongs to the NhaB Na(+)/H(+) (TC 2.A.34) antiporter family.

Its subcellular location is the cell inner membrane. It carries out the reaction 2 Na(+)(in) + 3 H(+)(out) = 2 Na(+)(out) + 3 H(+)(in). Its function is as follows. Na(+)/H(+) antiporter that extrudes sodium in exchange for external protons. The chain is Na(+)/H(+) antiporter NhaB from Shigella boydii serotype 18 (strain CDC 3083-94 / BS512).